The sequence spans 225 residues: Ribosomal RNA small subunit methyltransferase G (225 aa).

Residues Gly84, Phe89, 107–109 (DST), 135–136 (AE), and Arg154 contribute to the S-adenosyl-L-methionine site.

This sequence belongs to the methyltransferase superfamily. RNA methyltransferase RsmG family.

The protein localises to the cytoplasm. Functionally, specifically methylates the N7 position of a guanine in 16S rRNA. This chain is Ribosomal RNA small subunit methyltransferase G, found in Microcystis aeruginosa (strain NIES-843 / IAM M-2473).